We begin with the raw amino-acid sequence, 743 residues long: Protein STB5 (743 aa).

A DNA-binding region (zn(2)-C6 fungal-type) is located at residues 22–49 (CARCRKLKKKCGKQIPTCANCDKNGAHC). 2 disordered regions span residues 81–100 (VGKS…PLSA) and 155–249 (NSNP…YANN). 2 stretches are compositionally biased toward polar residues: residues 85–99 (PLST…SPLS) and 155–198 (NSNP…SPLI). The segment covering 213–238 (NNNRNTSNGDNGSNVNHDNNNGSTNT) has biased composition (low complexity). Over residues 239-249 (PQLSLTPYANN) the composition is skewed to polar residues.

It localises to the nucleus. Binds to SIN3. The sequence is that of Protein STB5 (STB5) from Saccharomyces cerevisiae (strain ATCC 204508 / S288c) (Baker's yeast).